A 225-amino-acid polypeptide reads, in one-letter code: Phosphatidylserine decarboxylase proenzyme (225 aa).

The active-site Schiff-base intermediate with substrate; via pyruvic acid is the serine 182. The residue at position 182 (serine 182) is a Pyruvic acid (Ser); by autocatalysis.

The protein belongs to the phosphatidylserine decarboxylase family. PSD-A subfamily. In terms of assembly, heterodimer of a large membrane-associated beta subunit and a small pyruvoyl-containing alpha subunit. The cofactor is pyruvate. In terms of processing, is synthesized initially as an inactive proenzyme. Formation of the active enzyme involves a self-maturation process in which the active site pyruvoyl group is generated from an internal serine residue via an autocatalytic post-translational modification. Two non-identical subunits are generated from the proenzyme in this reaction, and the pyruvate is formed at the N-terminus of the alpha chain, which is derived from the carboxyl end of the proenzyme. The post-translation cleavage follows an unusual pathway, termed non-hydrolytic serinolysis, in which the side chain hydroxyl group of the serine supplies its oxygen atom to form the C-terminus of the beta chain, while the remainder of the serine residue undergoes an oxidative deamination to produce ammonia and the pyruvoyl prosthetic group on the alpha chain.

It is found in the cell membrane. It carries out the reaction a 1,2-diacyl-sn-glycero-3-phospho-L-serine + H(+) = a 1,2-diacyl-sn-glycero-3-phosphoethanolamine + CO2. The protein operates within phospholipid metabolism; phosphatidylethanolamine biosynthesis; phosphatidylethanolamine from CDP-diacylglycerol: step 2/2. Its function is as follows. Catalyzes the formation of phosphatidylethanolamine (PtdEtn) from phosphatidylserine (PtdSer). In Neorickettsia sennetsu (strain ATCC VR-367 / Miyayama) (Ehrlichia sennetsu), this protein is Phosphatidylserine decarboxylase proenzyme.